A 432-amino-acid polypeptide reads, in one-letter code: 3-phosphoshikimate 1-carboxyvinyltransferase (432 aa).

Residues lysine 23, serine 24, and arginine 28 each contribute to the 3-phosphoshikimate site. Position 23 (lysine 23) interacts with phosphoenolpyruvate. Phosphoenolpyruvate is bound by residues glycine 95 and arginine 123. Serine 167, glutamine 169, aspartate 317, and lysine 344 together coordinate 3-phosphoshikimate. Glutamine 169 is a phosphoenolpyruvate binding site. Catalysis depends on aspartate 317, which acts as the Proton acceptor. Phosphoenolpyruvate is bound by residues arginine 348 and arginine 390.

It belongs to the EPSP synthase family. In terms of assembly, monomer.

The protein resides in the cytoplasm. The catalysed reaction is 3-phosphoshikimate + phosphoenolpyruvate = 5-O-(1-carboxyvinyl)-3-phosphoshikimate + phosphate. The protein operates within metabolic intermediate biosynthesis; chorismate biosynthesis; chorismate from D-erythrose 4-phosphate and phosphoenolpyruvate: step 6/7. Functionally, catalyzes the transfer of the enolpyruvyl moiety of phosphoenolpyruvate (PEP) to the 5-hydroxyl of shikimate-3-phosphate (S3P) to produce enolpyruvyl shikimate-3-phosphate and inorganic phosphate. The sequence is that of 3-phosphoshikimate 1-carboxyvinyltransferase from Staphylococcus aureus (strain COL).